The chain runs to 83 residues: U5-theraphotoxin-Hs1b 2 (83 aa).

A signal peptide spans 1–21 (MQTSMFLTLTGLVLLFVVCYA). Positions 22–49 (SESEEKEFPKELLSSIFAADSDFKEEER) are excised as a propeptide. 3 disulfides stabilise this stretch: Cys-51–Cys-63, Cys-56–Cys-68, and Cys-62–Cys-75.

Belongs to the neurotoxin 10 (Hwtx-1) family. 51 (Hntx-8) subfamily. Hntx-8 sub-subfamily. As to expression, expressed by the venom gland.

The protein resides in the secreted. In terms of biological role, agglutinates erythrocytes. The polypeptide is U5-theraphotoxin-Hs1b 2 (Cyriopagopus schmidti (Chinese bird spider)).